The following is a 299-amino-acid chain: UTP--glucose-1-phosphate uridylyltransferase 1 (299 aa).

This sequence belongs to the UDPGP type 2 family.

The catalysed reaction is alpha-D-glucose 1-phosphate + UTP + H(+) = UDP-alpha-D-glucose + diphosphate. Its pathway is carbohydrate metabolism; nucleotide-sugar metabolism. This is UTP--glucose-1-phosphate uridylyltransferase 1 (hasC1) from Streptococcus pyogenes serotype M6 (strain ATCC BAA-946 / MGAS10394).